Reading from the N-terminus, the 336-residue chain is IgLON family member 5 (336 aa).

An N-terminal signal peptide occupies residues 1-30 (MPPPAPGARLRLLAAAALAGLAVISRGLLS). Ig-like C2-type domains follow at residues 33-122 (LEFN…QPYT), 132-217 (PARI…VNYP), and 218-307 (PTIT…MRLL). N-linked (GlcNAc...) asparagine glycosylation is found at asparagine 41, asparagine 49, asparagine 67, and asparagine 137. Cysteine 54 and cysteine 112 form a disulfide bridge. Disulfide bonds link cysteine 154-cysteine 195 and cysteine 238-cysteine 291. Asparagine 288 carries an N-linked (GlcNAc...) asparagine glycan.

This sequence belongs to the immunoglobulin superfamily. IgLON family.

Its subcellular location is the secreted. The protein is IgLON family member 5 (IGLON5) of Homo sapiens (Human).